Here is a 518-residue protein sequence, read N- to C-terminus: Xylose import ATP-binding protein XylG (518 aa).

ABC transporter domains lie at 6-245 and 262-507; these read LQMN…VGRE and FEAR…LSQP. 38–45 serves as a coordination point for ATP; sequence GENGAGKS.

It belongs to the ABC transporter superfamily. Xylose importer (TC 3.A.1.2.4) family. As to quaternary structure, the complex is composed of two ATP-binding proteins (XylG), two transmembrane proteins (XylH) and a solute-binding protein (XylF).

The protein resides in the cell inner membrane. It catalyses the reaction D-xylose(out) + ATP + H2O = D-xylose(in) + ADP + phosphate + H(+). Its function is as follows. Part of the ABC transporter complex XylFGH involved in xylose import. Responsible for energy coupling to the transport system. The sequence is that of Xylose import ATP-binding protein XylG from Pseudomonas fluorescens (strain Pf0-1).